Consider the following 1203-residue polypeptide: Probable phospholipid-transporting ATPase 11 (1203 aa).

The Cytoplasmic portion of the chain corresponds to 1-71 (MTKCRRRRLH…STKYTLASFI (71 aa)). The chain crosses the membrane as a helical span at residues 72 to 93 (PKSLFEQFRRVANFYFLVTGVL). At 94–97 (SLTA) the chain is on the extracellular side. The helical transmembrane segment at 98-120 (LSPYSPISALLPLTFVIAASMVK) threads the bilayer. Topologically, residues 121–303 (EAIEDWGRKK…SRIERKMDKI (183 aa)) are cytoplasmic. Residues 304-325 (IYLMFGVVFLMSFIGSIVFGIE) form a helical membrane-spanning segment. The Extracellular segment spans residues 326–363 (TREDRVRNGGRTERWYLRPDNADIFFDPDRAPMAAVYH). The helical transmembrane segment at 364-381 (FFTAVMLYSYFIPISLYV) threads the bilayer. At 382–921 (SIEIVKVLQS…HGHWCYSRIS (540 aa)) the chain is on the cytoplasmic side. Asp429 acts as the 4-aspartylphosphate intermediate in catalysis. Asp866 and Asp870 together coordinate Mg(2+). The chain crosses the membrane as a helical span at residues 922–941 (SMICYFFYKNITFGVTVFLY). Residues 942-955 (EAYTSFSAQPAYND) are Extracellular-facing. The chain crosses the membrane as a helical span at residues 956 to 975 (WFLSLFNVFFSSLPVIALGV). At 976–1005 (FDQDVSARYCYKFPLLYQEGVQNLLFSWKR) the chain is on the cytoplasmic side. Residues 1006–1028 (IIGWMFNGVFTALAIFFLCKESL) form a helical membrane-spanning segment. Residues 1029–1041 (KHQLYNPNGKTAG) are Extracellular-facing. The helical transmembrane segment at 1042–1064 (REILGGTMYTCVVWVVNLQMALA) threads the bilayer. Residues 1065-1070 (ISYFTW) are Cytoplasmic-facing. Residues 1071–1091 (LQHIVIWGSVAFWYIFLMIYG) form a helical membrane-spanning segment. At 1092–1108 (AITPSFSTDAYKVFIEA) the chain is on the extracellular side. Residues 1109–1133 (LAPAPSYWLTTLFVMFFALIPFFVF) form a helical membrane-spanning segment. Over 1134 to 1203 (KSVQMRFFPG…DQLNKNFIAF (70 aa)) the chain is Cytoplasmic.

It belongs to the cation transport ATPase (P-type) (TC 3.A.3) family. Type IV subfamily.

It is found in the membrane. It carries out the reaction ATP + H2O + phospholipidSide 1 = ADP + phosphate + phospholipidSide 2.. Its function is as follows. Involved in transport of phospholipids. This is Probable phospholipid-transporting ATPase 11 from Arabidopsis thaliana (Mouse-ear cress).